The following is a 264-amino-acid chain: Major prion protein (264 aa).

A signal peptide spans 1–24 (MVKSHIGSWILVLFVAMWSDVGLC). An interaction with ADGRG6 region spans residues 25 to 41 (KKRPKPGGGWNTGGSRY). The interval 25 to 241 (KKRPKPGGGW…ESQAYYQRGA (217 aa)) is interaction with GRB2, ERI3 and SYN1. A disordered region spans residues 28-119 (PKPGGGWNTG…WNKPSKPKTN (92 aa)). 6 tandem repeats follow at residues 54 to 62 (PQGGGGWGQ), 63 to 70 (PHGGGWGQ), 71 to 78 (PHGGGWGQ), 79 to 86 (PHGGGWGQ), 87 to 94 (PHGGGWGQ), and 95 to 103 (PHGGGGWGQ). Residues 54–103 (PQGGGGWGQPHGGGWGQPHGGGWGQPHGGGWGQPHGGGWGQPHGGGGWGQ) are 6 X 8 AA tandem repeats of P-H-G-G-G-W-G-Q. The segment covering 55–107 (QGGGGWGQPHGGGWGQPHGGGWGQPHGGGWGQPHGGGWGQPHGGGGWGQGGTH) has biased composition (gly residues). Cu(2+) is bound by residues His-72, Gly-73, Gly-74, His-80, Gly-81, Gly-82, His-88, Gly-89, Gly-90, His-96, Gly-98, and Gly-99. Cysteines 190 and 225 form a disulfide. N-linked (GlcNAc...) asparagine glycans are attached at residues Asn-192 and Asn-208. A lipid anchor (GPI-anchor amidated alanine) is attached at Ala-241. Residues 242–264 (SVILFSSPPVILLISFLIFLIVG) constitute a propeptide, removed in mature form.

Belongs to the prion family. In terms of assembly, monomer and homodimer. Has a tendency to aggregate into amyloid fibrils containing a cross-beta spine, formed by a steric zipper of superposed beta-strands. Soluble oligomers may represent an intermediate stage on the path to fibril formation. Copper binding may promote oligomerization. Interacts with GRB2, APP, ERI3/PRNPIP and SYN1. Mislocalized cytosolically exposed PrP interacts with MGRN1; this interaction alters MGRN1 subcellular location and causes lysosomal enlargement. Interacts with APP. Interacts with KIAA1191. Interacts with ADGRG6.

The protein resides in the cell membrane. The protein localises to the golgi apparatus. Its function is as follows. Its primary physiological function is unclear. May play a role in neuronal development and synaptic plasticity. May be required for neuronal myelin sheath maintenance. May promote myelin homeostasis through acting as an agonist for ADGRG6 receptor. May play a role in iron uptake and iron homeostasis. Soluble oligomers are toxic to cultured neuroblastoma cells and induce apoptosis (in vitro). Association with GPC1 (via its heparan sulfate chains) targets PRNP to lipid rafts. Also provides Cu(2+) or Zn(2+) for the ascorbate-mediated GPC1 deaminase degradation of its heparan sulfate side chains. The polypeptide is Major prion protein (PRNP) (Bos indicus x Bos taurus (Hybrid cattle)).